A 143-amino-acid polypeptide reads, in one-letter code: Small ribosomal subunit protein uS9 (143 aa).

Residues 124–143 (PEPKKFGGKGARARFQKSYR) are disordered. The segment covering 134 to 143 (ARARFQKSYR) has biased composition (basic residues).

Belongs to the universal ribosomal protein uS9 family.

The protein is Small ribosomal subunit protein uS9 (RPS16) of Candida glabrata (strain ATCC 2001 / BCRC 20586 / JCM 3761 / NBRC 0622 / NRRL Y-65 / CBS 138) (Yeast).